The following is a 127-amino-acid chain: uncharacterized protein (127 aa).

The first 16 residues, 1-16 (MIKKIIFGIAILLSTS), serve as a signal peptide directing secretion. Cys-17 carries the N-palmitoyl cysteine lipid modification. Cys-17 carries S-diacylglycerol cysteine lipidation. The stretch at 56–101 (EVREEIQKYRVAIVKINKKKRELYNRLSKEAQNFLAEQQKYKQKLS) forms a coiled coil. The segment covering 107–118 (VENDQKNNTADS) has biased composition (polar residues). The segment at 107–127 (VENDQKNNTADSNDNKSKDTK) is disordered.

It localises to the cell membrane. This is an uncharacterized protein from Rickettsia conorii (strain ATCC VR-613 / Malish 7).